The chain runs to 308 residues: Pantoate--beta-alanine ligase (308 aa).

Position 2 (A2) is a propeptide, removed; partial.

The protein belongs to the pantothenate synthetase family. Homodimer. As to expression, expressed at low levels in leaf and root.

It localises to the cytoplasm. It carries out the reaction (R)-pantoate + beta-alanine + ATP = (R)-pantothenate + AMP + diphosphate + H(+). It participates in cofactor biosynthesis; (R)-pantothenate biosynthesis; (R)-pantothenate from (R)-pantoate and beta-alanine: step 1/1. The polypeptide is Pantoate--beta-alanine ligase (PANC) (Lotus japonicus (Lotus corniculatus var. japonicus)).